Reading from the N-terminus, the 551-residue chain is Monocarboxylic acid transporter (551 aa).

13 helical membrane-spanning segments follow: residues 18–38 (NPIL…TVVL), 63–83 (GLAI…VGAI), 90–110 (GFLY…LVAE), 144–164 (VTLF…SVLL), 171–191 (WQAV…LLGG), 203–223 (AVLL…KVSG), 267–287 (LDFI…PHVL), 307–327 (IVLI…AAAL), 355–375 (IFMA…VAGL), 411–431 (VVIG…NVAF), 432–452 (LVAL…LYSL), 463–483 (VAAI…SPAV), and 503–523 (NPGL…TLVG).

It belongs to the sodium:solute symporter (SSF) (TC 2.A.21) family.

It localises to the cell membrane. Acts as a secondary carrier for acetate, propionate and pyruvate. Has high affinity for acetate and propionate and lower affinity for pyruvate. Driven by the electrochemical proton potential. In Corynebacterium glutamicum (strain ATCC 13032 / DSM 20300 / JCM 1318 / BCRC 11384 / CCUG 27702 / LMG 3730 / NBRC 12168 / NCIMB 10025 / NRRL B-2784 / 534), this protein is Monocarboxylic acid transporter.